Here is a 416-residue protein sequence, read N- to C-terminus: cAMP-dependent protein kinase type II-beta regulatory subunit (416 aa).

The segment at 2 to 151 (SIEIPAGLTE…RLQEACKDIL (150 aa)) is dimerization and phosphorylation. Residues 53-97 (HEGRTWGDAGAAAGGGTPSKGVNFAEEPMRSDSENGEEEEAAEAG) are disordered. Threonine 69 carries the post-translational modification Phosphothreonine. Residues serine 83, serine 85, and serine 112 each carry the phosphoserine modification. 3',5'-cyclic AMP-binding positions include 152 to 273 (LFKN…ESLP), glutamate 221, arginine 230, 274 to 416 (FLKS…EPTA), glutamate 350, and arginine 359.

Belongs to the cAMP-dependent kinase regulatory chain family. In terms of assembly, the inactive form of the enzyme is composed of two regulatory chains and two catalytic chains. Activation by cAMP produces two active catalytic monomers and a regulatory dimer that binds four cAMP molecules. Interacts with PRKACA and PRKACB. Interacts with the phosphorylated form of PJA2. Forms a complex composed of PRKAR2B, GSK3B and GSKIP through GSKIP interaction; facilitates PKA-induced phosphorylation and regulates GSK3B activity. Post-translationally, phosphorylated by the activated catalytic chain. As to expression, four types of regulatory chains are found: I-alpha, I-beta, II-alpha, and II-beta. Their expression varies among tissues and is in some cases constitutive and in others inducible. Brain. Present in a few pyramidal neurons and mostly in mossy fibers. Colocalizes with PJA2 in dentate granule cells and at postsynaptic sites of primary hippocampal neurons.

The protein localises to the cytoplasm. It localises to the cell membrane. Its function is as follows. Regulatory subunit of the cAMP-dependent protein kinases involved in cAMP signaling in cells. Type II regulatory chains mediate membrane association by binding to anchoring proteins, including the MAP2 kinase. This chain is cAMP-dependent protein kinase type II-beta regulatory subunit (Prkar2b), found in Rattus norvegicus (Rat).